Reading from the N-terminus, the 518-residue chain is GMP synthase [glutamine-hydrolyzing] (518 aa).

The 193-residue stretch at 11–203 (KIIVLDFGSQ…AFDVCQARSN (193 aa)) folds into the Glutamine amidotransferase type-1 domain. The Nucleophile role is filled by Cys-88. Residues His-177 and Glu-179 contribute to the active site. Positions 204–393 (WSMDDFIDMQ…LGMPHELVWR (190 aa)) constitute a GMPS ATP-PPase domain. Residue 231–237 (SGGVDSS) participates in ATP binding.

In terms of assembly, homodimer.

It catalyses the reaction XMP + L-glutamine + ATP + H2O = GMP + L-glutamate + AMP + diphosphate + 2 H(+). It functions in the pathway purine metabolism; GMP biosynthesis; GMP from XMP (L-Gln route): step 1/1. Catalyzes the synthesis of GMP from XMP. In Ligilactobacillus salivarius (strain UCC118) (Lactobacillus salivarius), this protein is GMP synthase [glutamine-hydrolyzing].